The chain runs to 350 residues: Biotin synthase (350 aa).

The 225-residue stretch at 41-265 folds into the Radical SAM core domain; it reads NEVQISRLLS…VMPLSRVRLS (225 aa). [4Fe-4S] cluster-binding residues include cysteine 56, cysteine 60, and cysteine 63. Residues cysteine 100, cysteine 131, cysteine 191, and arginine 263 each contribute to the [2Fe-2S] cluster site.

It belongs to the radical SAM superfamily. Biotin synthase family. Homodimer. [4Fe-4S] cluster is required as a cofactor. [2Fe-2S] cluster serves as cofactor.

It catalyses the reaction (4R,5S)-dethiobiotin + (sulfur carrier)-SH + 2 reduced [2Fe-2S]-[ferredoxin] + 2 S-adenosyl-L-methionine = (sulfur carrier)-H + biotin + 2 5'-deoxyadenosine + 2 L-methionine + 2 oxidized [2Fe-2S]-[ferredoxin]. It participates in cofactor biosynthesis; biotin biosynthesis; biotin from 7,8-diaminononanoate: step 2/2. In terms of biological role, catalyzes the conversion of dethiobiotin (DTB) to biotin by the insertion of a sulfur atom into dethiobiotin via a radical-based mechanism. The polypeptide is Biotin synthase (Shewanella loihica (strain ATCC BAA-1088 / PV-4)).